A 138-amino-acid chain; its full sequence is ATP synthase epsilon chain (138 aa).

The protein belongs to the ATPase epsilon chain family. In terms of assembly, F-type ATPases have 2 components, CF(1) - the catalytic core - and CF(0) - the membrane proton channel. CF(1) has five subunits: alpha(3), beta(3), gamma(1), delta(1), epsilon(1). CF(0) has four main subunits: a(1), b(1), b'(1) and c(9-12).

It localises to the cellular thylakoid membrane. Produces ATP from ADP in the presence of a proton gradient across the membrane. Functionally, the complex from the organism is particularly stable to disruption and remains functional after 6 hours at 55 degrees Celsius. In Thermosynechococcus vestitus (strain NIES-2133 / IAM M-273 / BP-1), this protein is ATP synthase epsilon chain.